A 486-amino-acid polypeptide reads, in one-letter code: Cysteine--tRNA ligase (486 aa).

Cys29 lines the Zn(2+) pocket. The short motif at 31 to 41 (VTVYDYCHLGH) is the 'HIGH' region element. Cys214, His239, and Glu243 together coordinate Zn(2+). The short motif at 271–275 (KMSKS) is the 'KMSKS' region element. Position 274 (Lys274) interacts with ATP.

Belongs to the class-I aminoacyl-tRNA synthetase family. As to quaternary structure, monomer. Zn(2+) is required as a cofactor.

The protein resides in the cytoplasm. The enzyme catalyses tRNA(Cys) + L-cysteine + ATP = L-cysteinyl-tRNA(Cys) + AMP + diphosphate. This chain is Cysteine--tRNA ligase, found in Nostoc sp. (strain PCC 7120 / SAG 25.82 / UTEX 2576).